Here is a 118-residue protein sequence, read N- to C-terminus: Small ribosomal subunit protein uS13 (118 aa).

Residues 91–118 (HRRGLPVRGQRTKTNARTRKGPRKPIKK) are disordered.

Belongs to the universal ribosomal protein uS13 family. In terms of assembly, part of the 30S ribosomal subunit. Forms a loose heterodimer with protein S19. Forms two bridges to the 50S subunit in the 70S ribosome.

Functionally, located at the top of the head of the 30S subunit, it contacts several helices of the 16S rRNA. In the 70S ribosome it contacts the 23S rRNA (bridge B1a) and protein L5 of the 50S subunit (bridge B1b), connecting the 2 subunits; these bridges are implicated in subunit movement. Contacts the tRNAs in the A and P-sites. This chain is Small ribosomal subunit protein uS13, found in Pectobacterium atrosepticum (strain SCRI 1043 / ATCC BAA-672) (Erwinia carotovora subsp. atroseptica).